The chain runs to 425 residues: MTKALDGVRILDFTHVQSGPTCTQLLAWFGADVIKVERPGTGDITRGQLQDIPKVDSLYFTMLNHNKRSITLDTKNPKGKEVLTALIRSCDVLVENFGPGVLDRMGFTWDKIQEINPRMIVASIKGFGPGPYEDCKVYENVAQCTGGAASTTGFRDGPPLVTGAQIGDSGTGLHLALGIVTALYQRHHTGRGQRVTAAMQDGVLNLSRVKLRDQQRLAHGPLKEYSQFGEGIPFGDAVPRAGNDSGGGQPGRILKCKGWETDPNAYIYFIAQAPVWEKICDVIGETGWKTHPDYATPPARLKHLNDIFARIEQWTMTKTKFEAMDILNRDDIPCGPILSMKELAEDASLRATGTIVEVDHPTRGKYLSVGNPIKLSDSPTHVERSPLLGEHTDEILRDVLGFNDHQVAEIHDSGALAPPRKQAAE.

CoA contacts are provided by residues 17-18 (QS), R38, 72-75 (LDTK), 96-98 (NFG), R104, and 136-139 (KVYE). The active-site Nucleophile is D168. 247-249 (GGQ) is a substrate binding site.

Belongs to the CoA-transferase III family. Frc subfamily. In terms of assembly, homodimer.

The enzyme catalyses formyl-CoA + oxalate = oxalyl-CoA + formate. It functions in the pathway metabolic intermediate degradation; oxalate degradation; CO(2) and formate from oxalate: step 1/2. Its function is as follows. Involved in the catabolism of oxalate and in the adapatation to low pH via the induction of the oxalate-dependent acid tolerance response (ATR). Catalyzes the transfer of the CoA moiety from formyl-CoA to oxalate. The protein is Formyl-CoA:oxalate CoA-transferase of Rhodopseudomonas palustris (strain HaA2).